Here is a 23-residue protein sequence, read N- to C-terminus: Caerulein precursor fragment R6 (23 aa).

As to expression, expressed by the skin glands.

It localises to the secreted. Its function is as follows. Antimicrobial peptide. The sequence is that of Caerulein precursor fragment R6 from Xenopus ruwenzoriensis (Uganda clawed frog).